A 360-amino-acid polypeptide reads, in one-letter code: Bifunctional protein FolD 4, chloroplastic (360 aa).

A chloroplast-targeting transit peptide spans 1–51 (MASMMFTDCSSTTTSRLIHLNRSSGTFLLRQCVGQLRLQTTASGRGCCIRS). The residue at position 52 (Ser-52) is an N-acetylserine.

This sequence belongs to the tetrahydrofolate dehydrogenase/cyclohydrolase family. Homodimer.

The protein localises to the plastid. It localises to the chloroplast. The catalysed reaction is (6R)-5,10-methylene-5,6,7,8-tetrahydrofolate + NADP(+) = (6R)-5,10-methenyltetrahydrofolate + NADPH. The enzyme catalyses (6R)-5,10-methenyltetrahydrofolate + H2O = (6R)-10-formyltetrahydrofolate + H(+). The protein operates within one-carbon metabolism; tetrahydrofolate interconversion. Catalyzes the oxidation of 5,10-methylenetetrahydrofolate to 5,10-methenyltetrahydrofolate and then the hydrolysis of 5,10-methenyltetrahydrofolate to 10-formyltetrahydrofolate. This Arabidopsis thaliana (Mouse-ear cress) protein is Bifunctional protein FolD 4, chloroplastic (FOLD4).